Reading from the N-terminus, the 171-residue chain is uncharacterized protein (171 aa).

This is an uncharacterized protein from Haemophilus influenzae (strain ATCC 51907 / DSM 11121 / KW20 / Rd).